Consider the following 368-residue polypeptide: tRNA-specific 2-thiouridylase MnmA (368 aa).

Residues 11 to 18 (GMSGGVDS) and Met37 each bind ATP. Residues 97 to 99 (NPD) form an interaction with target base in tRNA region. The active-site Nucleophile is Cys102. Cys102 and Cys199 are oxidised to a cystine. ATP is bound at residue Gly127. Residues 149–151 (KDQ) form an interaction with tRNA region. Residue Cys199 is the Cysteine persulfide intermediate of the active site. Residues 311-312 (RY) form an interaction with tRNA region.

It belongs to the MnmA/TRMU family. In terms of assembly, interacts with TusE.

The protein localises to the cytoplasm. The catalysed reaction is S-sulfanyl-L-cysteinyl-[protein] + uridine(34) in tRNA + AH2 + ATP = 2-thiouridine(34) in tRNA + L-cysteinyl-[protein] + A + AMP + diphosphate + H(+). Functionally, catalyzes the 2-thiolation of uridine at the wobble position (U34) of tRNA(Lys), tRNA(Glu) and tRNA(Gln), leading to the formation of s(2)U34, the first step of tRNA-mnm(5)s(2)U34 synthesis. Sulfur is provided by IscS, via a sulfur-relay system. Binds ATP and its substrate tRNAs. This is tRNA-specific 2-thiouridylase MnmA from Salmonella arizonae (strain ATCC BAA-731 / CDC346-86 / RSK2980).